We begin with the raw amino-acid sequence, 127 residues long: Large-conductance mechanosensitive channel (127 aa).

Transmembrane regions (helical) follow at residues 14–34 and 69–89; these read VLDL…VKSL and GAFL…FLIV.

The protein belongs to the MscL family. Homopentamer.

It is found in the cell membrane. In terms of biological role, channel that opens in response to stretch forces in the membrane lipid bilayer. May participate in the regulation of osmotic pressure changes within the cell. The polypeptide is Large-conductance mechanosensitive channel (Leuconostoc mesenteroides subsp. mesenteroides (strain ATCC 8293 / DSM 20343 / BCRC 11652 / CCM 1803 / JCM 6124 / NCDO 523 / NBRC 100496 / NCIMB 8023 / NCTC 12954 / NRRL B-1118 / 37Y)).